Reading from the N-terminus, the 278-residue chain is Large ribosomal subunit protein uL2c (278 aa).

Residues 224-267 are disordered; it reads VVMNPVDHPHGGGEGRAPIGRKKPLTPWGHTALGGRSRKNHKYS.

The protein belongs to the universal ribosomal protein uL2 family. As to quaternary structure, part of the 50S ribosomal subunit.

The protein localises to the plastid. The protein resides in the chloroplast. The sequence is that of Large ribosomal subunit protein uL2c (rpl2) from Huperzia lucidula (Shining clubmoss).